Consider the following 145-residue polypeptide: U20-hexatoxin-Hi1a (145 aa).

Positions Met1 to Gly16 are cleaved as a signal peptide. 2 consecutive Thyroglobulin type-1 domains span residues Lys20–Met73 and Ala82–Cys145. Intrachain disulfides connect Cys23-Cys45, Cys56-Cys63, Cys85-Cys106, Cys117-Cys124, and Cys126-Cys145.

In terms of tissue distribution, expressed by the venom gland.

Its subcellular location is the secreted. Its function is as follows. Cysteine proteinase inhibitor. The protein is U20-hexatoxin-Hi1a of Hadronyche infensa (Fraser island funnel-web spider).